The sequence spans 1093 residues: Protein transport protein Sec24A (1093 aa).

Disordered stretches follow at residues 1–29 (MSQP…SGSP), 60–168 (HPIP…TSLT), 189–226 (GPSV…ALTP), and 294–328 (SLPP…TQTP). 2 stretches are compositionally biased toward polar residues: residues 112–126 (ASQN…SSSF) and 138–168 (WQYN…TSLT). 2 stretches are compositionally biased toward pro residues: residues 191–201 (SVPPLVNPPLP) and 209–221 (PHGP…PPPV). Polar residues predominate over residues 299 to 328 (YQNTTPPGATGVPPSSLNYPSGPQAFTQTP). Zn(2+) contacts are provided by C431, C434, C452, and C455. The interval 431–455 (CRSCRTYINPFVSFLDQRRWKCNLC) is zinc finger-like. The Gelsolin-like repeat unit spans residues 966–1038 (PQPPILQLSV…TPESARIIAF (73 aa)).

The protein belongs to the SEC23/SEC24 family. SEC24 subfamily. As to quaternary structure, COPII is composed of at least five proteins: the Sec23/24 complex, the Sec13/31 complex and Sar1. Interacts with TMED2. Interacts (as part of the Sec23/24 complex) with SEC22B; recruits SEC22B into COPII-coated vesicles for its transport from the endoplasmic reticulum to the Golgi. Interacts with STING1; promoting STING1 translocation to COPII vesicles in a STEEP1-dependent manner. Interacts with TMEM39A. Interacts with SACM1L; this interaction is reduced in the absence of TMEM39A. Interacts with kinase FAM20C; transport of FAM20C from the endoplasmic reticulum to the Golgi is likely to be mediated by COPII vesicles.

The protein resides in the cytoplasmic vesicle. It localises to the COPII-coated vesicle membrane. The protein localises to the endoplasmic reticulum membrane. Its subcellular location is the cytoplasm. It is found in the cytosol. Functionally, component of the coat protein complex II (COPII) which promotes the formation of transport vesicles from the endoplasmic reticulum (ER). The coat has two main functions, the physical deformation of the endoplasmic reticulum membrane into vesicles and the selection of cargo molecules for their transport to the Golgi complex. Plays a central role in cargo selection within the COPII complex and together with SEC24B may have a different specificity compared to SEC24C and SEC24D. May package preferentially cargos with cytoplasmic DxE or LxxLE motifs and may also recognize conformational epitopes. This chain is Protein transport protein Sec24A, found in Homo sapiens (Human).